The primary structure comprises 126 residues: Small ribosomal subunit protein uS13 (126 aa).

The segment at 91–126 is disordered; the sequence is HRAGLPVRGQRTRTNSRTRRSAKRTVAGKKKAPSKK. Residues 100–126 show a composition bias toward basic residues; sequence QRTRTNSRTRRSAKRTVAGKKKAPSKK.

It belongs to the universal ribosomal protein uS13 family. As to quaternary structure, part of the 30S ribosomal subunit. Forms a loose heterodimer with protein S19. Forms two bridges to the 50S subunit in the 70S ribosome.

Its function is as follows. Located at the top of the head of the 30S subunit, it contacts several helices of the 16S rRNA. In the 70S ribosome it contacts the 23S rRNA (bridge B1a) and protein L5 of the 50S subunit (bridge B1b), connecting the 2 subunits; these bridges are implicated in subunit movement. Contacts the tRNAs in the A and P-sites. This chain is Small ribosomal subunit protein uS13, found in Acaryochloris marina (strain MBIC 11017).